A 355-amino-acid chain; its full sequence is DNA polymerase IV (355 aa).

The UmuC domain maps to 7–188 (IIHIDMDCFY…LPVRKLFGVG (182 aa)). Residues D11 and D106 each contribute to the Mg(2+) site. Residue E107 is part of the active site.

Belongs to the DNA polymerase type-Y family. As to quaternary structure, monomer. Mg(2+) is required as a cofactor.

The protein resides in the cytoplasm. The enzyme catalyses DNA(n) + a 2'-deoxyribonucleoside 5'-triphosphate = DNA(n+1) + diphosphate. Poorly processive, error-prone DNA polymerase involved in untargeted mutagenesis. Copies undamaged DNA at stalled replication forks, which arise in vivo from mismatched or misaligned primer ends. These misaligned primers can be extended by PolIV. Exhibits no 3'-5' exonuclease (proofreading) activity. May be involved in translesional synthesis, in conjunction with the beta clamp from PolIII. This Legionella pneumophila (strain Paris) protein is DNA polymerase IV.